The primary structure comprises 563 residues: Dicarboxylate transporter 2.1, chloroplastic (563 aa).

The transit peptide at 1–68 (MESFALHSLS…LKPIPRFSTR (68 aa)) directs the protein to the chloroplast. Disordered stretches follow at residues 16–45 (TLLS…STIS) and 71–92 (AAPQ…PSPQ). The segment covering 28–45 (RLSLLRRTSSRSPPSTIS) has biased composition (low complexity). The segment covering 76–90 (NAPPPPPPSPSPSPS) has biased composition (pro residues). Helical transmembrane passes span 96–116 (LIPL…VPVP), 134–154 (IAGL…GLTA), 165–185 (AAFS…FFFA), 234–254 (AGGI…SKPN), 261–281 (LGSY…ALFL), 308–328 (WFKA…LILY), 358–378 (NEWI…CGET), 379–399 (LGIP…VLGV), 414–434 (TLAW…LGVV), 450–470 (LSWP…HYLF), 483–503 (AFLA…LALA), and 537–557 (IGFV…TFWW).

Belongs to the SLC13A/DASS transporter (TC 2.A.47) family. DIT1 subfamily. Expressed in roots, rosette and cauline leaves, stems, flowers and siliques.

Its subcellular location is the plastid. It localises to the chloroplast inner membrane. Its function is as follows. Glutamate/malate translocator involved with DIT1 in primary ammonia assimilation and in the re-assimilation of ammonia generated by the photorespiratory pathway. Exports the end product of ammonia assimilation, glutamate, from plastids to the cytosol. The precursor for ammonia assimilation, 2-oxoglutarate, is imported from the cytosol by DIT1. The polypeptide is Dicarboxylate transporter 2.1, chloroplastic (DIT2-1) (Arabidopsis thaliana (Mouse-ear cress)).